A 345-amino-acid polypeptide reads, in one-letter code: Protein D345L (345 aa).

It belongs to the asfivirus D345L family. As to quaternary structure, interacts with IKKA/CHUK and IKBKB.

The protein localises to the host cytoplasm. Functionally, plays a role in the negative regulation of host NF-kappa-B signaling pathway. Mechanistically, recruits IKKA/CHUK and IKBKB to suppress their kinase activity towards NFKBIA. This is Protein D345L from African swine fever virus (isolate Tick/South Africa/Pretoriuskop Pr4/1996) (ASFV).